The primary structure comprises 207 residues: MTEPHANKQLEILRFIYDTVEERAFPPTVREICSAVDLSSTSTVHGHLARLEKKGYILKDATKPRAIEVTEKGREALGIKPKDIPVVGVVTAGQPILAVQDIDEYFPLPPDLENDAGELFMLRVHGESMINAGILNGDHVIVRKQSSANNGEIVVAMTEDNEATVKRFFKEDGYYRLQPENDTMDPIILPVVQILGKVVGLYRNNID.

Positions 29-49 form a DNA-binding region, H-T-H motif; that stretch reads VREICSAVDLSSTSTVHGHLA. Residues Ser128 and Lys166 each act as for autocatalytic cleavage activity in the active site.

Belongs to the peptidase S24 family. Homodimer.

It carries out the reaction Hydrolysis of Ala-|-Gly bond in repressor LexA.. Represses a number of genes involved in the response to DNA damage (SOS response), including recA and lexA. In the presence of single-stranded DNA, RecA interacts with LexA causing an autocatalytic cleavage which disrupts the DNA-binding part of LexA, leading to derepression of the SOS regulon and eventually DNA repair. This is LexA repressor from Lactobacillus johnsonii (strain CNCM I-12250 / La1 / NCC 533).